The chain runs to 295 residues: Maintenance of mitochondrial morphology protein 1 (295 aa).

Topologically, residues 1 to 12 are lumenal; sequence MVQLFHLTFTQG. Residues 13-33 form a helical membrane-spanning segment; it reads FFIGQLSVIVIVYIFLRFFLF. Residues 34 to 295 lie on the Cytoplasmic side of the membrane; it reads CTKEELKNVQ…REGHRQKSTE (262 aa). In terms of domain architecture, SMP-LTD spans 81–278; that stretch reads EEESLDWFNV…SPQFQQISIP (198 aa).

It belongs to the MMM1 family. In terms of assembly, homodimer. Component of the ER-mitochondria encounter structure (ERMES) or MDM complex, composed of mmm1, mdm10, mdm12 and mdm34. A mmm1 homodimer associates with one molecule of mdm12 on each side in a pairwise head-to-tail manner, and the SMP-LTD domains of mmm1 and mdm12 generate a continuous hydrophobic tunnel for phospholipid trafficking.

The protein localises to the endoplasmic reticulum membrane. In terms of biological role, component of the ERMES/MDM complex, which serves as a molecular tether to connect the endoplasmic reticulum (ER) and mitochondria. Components of this complex are involved in the control of mitochondrial shape and protein biogenesis, and function in nonvesicular lipid trafficking between the ER and mitochondria. The mdm12-mmm1 subcomplex functions in the major beta-barrel assembly pathway that is responsible for biogenesis of all outer membrane beta-barrel proteins, and acts in a late step after the SAM complex. The mdm10-mdm12-mmm1 subcomplex further acts in the TOM40-specific pathway after the action of the mdm12-mmm1 complex. Essential for establishing and maintaining the structure of mitochondria and maintenance of mtDNA nucleoids. The protein is Maintenance of mitochondrial morphology protein 1 of Schizosaccharomyces japonicus (strain yFS275 / FY16936) (Fission yeast).